A 691-amino-acid polypeptide reads, in one-letter code: MSVPAQPAPGADGGDPRQPIRVPAGTTAAAAIGEAGLPRRGAPDAIVVVRDAEGKLRDLSWVPDADAEVTPIAANTDDGRSVIRHSTAHVLAQAVQDLFPQAKLGIGPPITDGFYYDFEVLEPFTPDDLQALEKRMRQIVKEGQLFDRRVFESKDQAREELANEPYKLELVDDKSGDPDVMEVGGDELTAYDNLNPRTRERVWGDLCRGPHIPTTKHIPAFKLTRSSAAYWRGDQKNASLQRIYGTAWESQEALDKHIELIEEAQRRDHRKLGVELDLFSFPDEIGSGLAVFHPKGGIVRRELEDYSRRKHTEAGYQFVNSPHITKAQLFHTSGHLDWYADGMFPPMQIDAEYNADGTVRKPGQDYYLKPMNCPMHCLIFRARGRSYRELPLRLFEFGTVYRYEKSGVVHGLTRVRGLTMDDAHIFCTREQMRDELRSLLRFVLDLLSDYGLTDFYLELSTKDPDKFVGSDEVWEEATNVLAEVGAESGLELVPDPGGAAFYGPKISVQVKDALGRTWQMSTIQLDFNFPERFGLEYTAADGTRQRPVMIHRALFGSIERFFGILTEHYAGAFPAWLAPVQAVGIPVADEHVAYLEQVAAQLKSHGVRVEVDTSDDRMAKKIVHHTNQKVPFMLLAGDRDVQADAVSFRFGDRTQINGVPREAAVAAIVDWISRRENATPTAELVKVDSGE.

Positions 1–22 (MSVPAQPAPGADGGDPRQPIRV) are disordered. The TGS domain occupies 1-73 (MSVPAQPAPG…DADAEVTPIA (73 aa)). The segment at 268–574 (DHRKLGVELD…LTEHYAGAFP (307 aa)) is catalytic. Zn(2+) is bound by residues Cys373, His424, and His551.

This sequence belongs to the class-II aminoacyl-tRNA synthetase family. Homodimer. Zn(2+) serves as cofactor.

It localises to the cytoplasm. The enzyme catalyses tRNA(Thr) + L-threonine + ATP = L-threonyl-tRNA(Thr) + AMP + diphosphate + H(+). Functionally, catalyzes the attachment of threonine to tRNA(Thr) in a two-step reaction: L-threonine is first activated by ATP to form Thr-AMP and then transferred to the acceptor end of tRNA(Thr). Also edits incorrectly charged L-seryl-tRNA(Thr). This is Threonine--tRNA ligase from Mycobacterium marinum (strain ATCC BAA-535 / M).